Consider the following 380-residue polypeptide: MANLRKTHPLLKIANDALVDLPAPSNISVWWNFGSLLGLCLATQILTGLFLAMHYTSDISTAFSSVCHICRDVSYGWLIRNIHANGASFFFICIYMHIARGLYYGSYLYKETWNIGVVLLLLTMMTAFVGYVLPWGQMSFWGATVITNLLSAVPYVGGALVQWIWGGFSVDNATLTRFFAFHFLFPFVIAAATVLHLLFLHETGSNNPAGINSDADKISFHPYFSYKDLLGFVAMLLGLTSLALFAPNLLGDPDNFTPANPLVTPPHIKPEWYFLFAYAILRSIPNKLGGVLALLFSILVLMVVPILHTSKQRGLTFRPLTQFLFWTLVADMLILTWIGGMPVEHPFIIIGQIASVIYFTIFLVLAPLAGWAENKALEWT.

4 consecutive transmembrane segments (helical) span residues 33 to 53 (FGSL…FLAM), 77 to 98 (WLIR…YMHI), 113 to 133 (WNIG…GYVL), and 178 to 198 (FFAF…LHLL). Residues His83 and His97 each coordinate heme b. The heme b site is built by His182 and His196. His201 is an a ubiquinone binding site. 4 helical membrane passes run 226–246 (YKDL…ALFA), 288–308 (LGGV…PILH), 320–340 (LTQF…WIGG), and 347–367 (FIII…VLAP).

It belongs to the cytochrome b family. The cytochrome bc1 complex contains 3 respiratory subunits (MT-CYB, CYC1 and UQCRFS1), 2 core proteins (UQCRC1 and UQCRC2) and probably 6 low-molecular weight proteins. The cofactor is heme b.

It localises to the mitochondrion inner membrane. In terms of biological role, component of the ubiquinol-cytochrome c reductase complex (complex III or cytochrome b-c1 complex) that is part of the mitochondrial respiratory chain. The b-c1 complex mediates electron transfer from ubiquinol to cytochrome c. Contributes to the generation of a proton gradient across the mitochondrial membrane that is then used for ATP synthesis. In Salmo salar (Atlantic salmon), this protein is Cytochrome b (mt-cyb).